A 119-amino-acid polypeptide reads, in one-letter code: Large ribosomal subunit protein bL20c (119 aa).

This sequence belongs to the bacterial ribosomal protein bL20 family.

The protein resides in the plastid. It is found in the chloroplast. Its function is as follows. Binds directly to 23S ribosomal RNA and is necessary for the in vitro assembly process of the 50S ribosomal subunit. It is not involved in the protein synthesizing functions of that subunit. The chain is Large ribosomal subunit protein bL20c (rpl20) from Pinus thunbergii (Japanese black pine).